Here is a 51-residue protein sequence, read N- to C-terminus: Large ribosomal subunit protein bL33 (51 aa).

Belongs to the bacterial ribosomal protein bL33 family.

This Psychrobacter sp. (strain PRwf-1) protein is Large ribosomal subunit protein bL33.